The sequence spans 79 residues: Small ribosomal subunit protein bS18 (79 aa).

It belongs to the bacterial ribosomal protein bS18 family. Part of the 30S ribosomal subunit. Forms a tight heterodimer with protein bS6.

Binds as a heterodimer with protein bS6 to the central domain of the 16S rRNA, where it helps stabilize the platform of the 30S subunit. The sequence is that of Small ribosomal subunit protein bS18 from Rhodopseudomonas palustris (strain HaA2).